The following is a 315-amino-acid chain: Protein FRA10AC1 homolog (315 aa).

Methionine 1 is subject to N-acetylmethionine. The interval 1-28 (MHGHGGYDSDFSDDEQGGGSSKKRKKTV) is disordered. Phosphoserine occurs at positions 9 and 12. Position 36 is an N6-acetyllysine (lysine 36). Positions 225–235 (KEIKSTKKKSK) are enriched in basic residues. Residues 225–308 (KEIKSTKKKS…EKSQEEEFDD (84 aa)) are disordered. Composition is skewed to basic and acidic residues over residues 236–245 (TTPECDESPR) and 255–278 (EASK…NRNA). A phosphoserine mark is found at serine 283 and serine 285.

In terms of assembly, interacts with ESS2.

The protein resides in the nucleus. Its function is as follows. May be involved in pre-mRNA splicing. The polypeptide is Protein FRA10AC1 homolog (Fra10ac1) (Mus musculus (Mouse)).